A 502-amino-acid chain; its full sequence is Probable glycerol kinase (502 aa).

Thr11 contacts substrate. ATP is bound at residue Arg15. Arg85, Tyr140, and Asp246 together coordinate substrate. ATP is bound by residues Thr268, Gly313, and 416–420 (GMIAN).

It belongs to the FGGY kinase family.

It carries out the reaction glycerol + ATP = sn-glycerol 3-phosphate + ADP + H(+). It participates in polyol metabolism; glycerol degradation via glycerol kinase pathway; sn-glycerol 3-phosphate from glycerol: step 1/1. This is Probable glycerol kinase from Caenorhabditis elegans.